The sequence spans 213 residues: Bacteriochlorophyll synthase 23 kDa chain (213 aa).

The protein operates within porphyrin-containing compound metabolism; bacteriochlorophyll biosynthesis (light-independent). This is Bacteriochlorophyll synthase 23 kDa chain (bchJ) from Rhodobacter capsulatus (strain ATCC BAA-309 / NBRC 16581 / SB1003).